The following is a 37-amino-acid chain: Photosystem I reaction center subunit VIII (37 aa).

Residues 10–30 (IFVPLVGLVFPAIAMASLSLY) traverse the membrane as a helical segment.

Belongs to the PsaI family.

The protein localises to the plastid. Its subcellular location is the chloroplast thylakoid membrane. May help in the organization of the PsaL subunit. In Gossypium hirsutum (Upland cotton), this protein is Photosystem I reaction center subunit VIII.